The sequence spans 132 residues: UPF0299 membrane protein YohJ (132 aa).

The next 4 helical transmembrane spans lie at 7–27 (IIWQ…AGIF), 31–51 (LLPV…VLLA), 63–83 (GCYV…VGVM), and 93–113 (FGPV…VVSW).

Belongs to the UPF0299 family.

It is found in the cell inner membrane. The protein is UPF0299 membrane protein YohJ of Shigella boydii serotype 4 (strain Sb227).